The primary structure comprises 444 residues: Trigger factor (444 aa).

In terms of domain architecture, PPIase FKBP-type spans 166–251; the sequence is GDQVVIDFKG…VKAVKAPKAA (86 aa).

The protein belongs to the FKBP-type PPIase family. Tig subfamily.

It is found in the cytoplasm. The enzyme catalyses [protein]-peptidylproline (omega=180) = [protein]-peptidylproline (omega=0). Functionally, involved in protein export. Acts as a chaperone by maintaining the newly synthesized protein in an open conformation. Functions as a peptidyl-prolyl cis-trans isomerase. The chain is Trigger factor from Cereibacter sphaeroides (strain ATCC 17029 / ATH 2.4.9) (Rhodobacter sphaeroides).